The following is a 343-amino-acid chain: tRNA N6-adenosine threonylcarbamoyltransferase (343 aa).

His-112 and His-116 together coordinate Fe cation. Substrate-binding positions include 135 to 139 (LVSGG), Asp-168, Gly-181, and Asn-273. Fe cation is bound at residue Asp-301.

This sequence belongs to the KAE1 / TsaD family. The cofactor is Fe(2+).

It is found in the cytoplasm. It catalyses the reaction L-threonylcarbamoyladenylate + adenosine(37) in tRNA = N(6)-L-threonylcarbamoyladenosine(37) in tRNA + AMP + H(+). Functionally, required for the formation of a threonylcarbamoyl group on adenosine at position 37 (t(6)A37) in tRNAs that read codons beginning with adenine. Is involved in the transfer of the threonylcarbamoyl moiety of threonylcarbamoyl-AMP (TC-AMP) to the N6 group of A37, together with TsaE and TsaB. TsaD likely plays a direct catalytic role in this reaction. The polypeptide is tRNA N6-adenosine threonylcarbamoyltransferase (Azoarcus sp. (strain BH72)).